The sequence spans 451 residues: UDP-N-acetylmuramate--L-alanine ligase (451 aa).

110 to 116 is an ATP binding site; the sequence is GTHGKTT.

Belongs to the MurCDEF family.

The protein localises to the cytoplasm. The catalysed reaction is UDP-N-acetyl-alpha-D-muramate + L-alanine + ATP = UDP-N-acetyl-alpha-D-muramoyl-L-alanine + ADP + phosphate + H(+). The protein operates within cell wall biogenesis; peptidoglycan biosynthesis. Its function is as follows. Cell wall formation. In Francisella tularensis subsp. tularensis (strain WY96-3418), this protein is UDP-N-acetylmuramate--L-alanine ligase.